The following is a 616-amino-acid chain: Chaperone protein HscA (616 aa).

Belongs to the heat shock protein 70 family.

Functionally, chaperone involved in the maturation of iron-sulfur cluster-containing proteins. Has a low intrinsic ATPase activity which is markedly stimulated by HscB. Involved in the maturation of IscU. The chain is Chaperone protein HscA from Escherichia coli O139:H28 (strain E24377A / ETEC).